The sequence spans 1047 residues: FACT complex subunit SPT16 (1047 aa).

Position 2 is an N-acetylalanine (Ala2). Lys139 is modified (N6-acetyllysine). The residue at position 188 (Ser188) is a Phosphoserine. N6-acetyllysine is present on residues Lys196 and Lys223. Residues 432-507 adopt a coiled-coil conformation; the sequence is LKNEDEEEEE…GEQQIQKARK (76 aa). Ser455 bears the Phosphoserine mark. Positions 492–518 are disordered; it reads RLTEQKGEQQIQKARKSNVSYKNPSLM. Residue Lys497 forms a Glycyl lysine isopeptide (Lys-Gly) (interchain with G-Cter in SUMO2) linkage. Polar residues predominate over residues 499–514; the sequence is EQQIQKARKSNVSYKN. Ser508 bears the Phosphoserine mark. Lys513 bears the N6-acetyllysine; alternate mark. A Glycyl lysine isopeptide (Lys-Gly) (interchain with G-Cter in SUMO2); alternate cross-link involves residue Lys513. Residue Lys647 forms a Glycyl lysine isopeptide (Lys-Gly) (interchain with G-Cter in SUMO2) linkage. A phosphoserine mark is found at Ser650 and Ser658. 2 positions are modified to N6-acetyllysine: Lys732 and Lys786. Thr903 is modified (phosphothreonine). The residue at position 904 (Lys904) is an N6-acetyllysine. A disordered region spans residues 918–1047; sequence EQGGWSFLEP…SSAPPKKKRK (130 aa). Residues 927 to 973 are compositionally biased toward acidic residues; the sequence is PEGEGSDAEEGDSESEIEDETFNPSEDDYEEEEEDSDEDYSSEAEES. Phosphoserine occurs at positions 979, 982, 986, and 1015. The segment covering 985–1005 has biased composition (basic and acidic residues); it reads ESGKDWDELEEEARKADRESR. Residues 1024-1039 show a composition bias toward low complexity; it reads VHSSGRGSNRGSRHSS.

It belongs to the peptidase M24 family. SPT16 subfamily. As to quaternary structure, interacts with MYOG (via C-terminal region). Component of the FACT complex, a stable heterodimer of SSRP1 and SUPT16H. Also a component of a CK2-SPT16-SSRP1 complex which forms following UV irradiation, composed of SSRP1, SUPT16H, CSNK2A1, CSNK2A2 and CSNK2B. Interacts with NEK9. Binds to histone H2A-H2B. Identified in a centromere complex containing histones H2A, H2B and H4, and at least CENPA, CENPB, CENPC, CENPT, CENPN, HJURP, SUPT16H, SSRP1 and RSF1. Interacts with GTF2E2. In terms of assembly, (Microbial infection) Interacts with Herpes simplex virus 1 (HHV-1) protein ICP22; this interaction relocalizes the FACT complex to viral genomes in infected cells. Post-translationally, ADP-ribosylated. ADP-ribosylation by PARP1 is induced by genotoxic stress and correlates with dissociation of FACT from chromatin. In terms of tissue distribution, ubiquitous.

The protein resides in the nucleus. It is found in the chromosome. Its function is as follows. Component of the FACT complex, a general chromatin factor that acts to reorganize nucleosomes. The FACT complex is involved in multiple processes that require DNA as a template such as mRNA elongation, DNA replication and DNA repair. During transcription elongation the FACT complex acts as a histone chaperone that both destabilizes and restores nucleosomal structure. It facilitates the passage of RNA polymerase II and transcription by promoting the dissociation of one histone H2A-H2B dimer from the nucleosome, then subsequently promotes the reestablishment of the nucleosome following the passage of RNA polymerase II. The FACT complex is probably also involved in phosphorylation of 'Ser-392' of p53/TP53 via its association with CK2 (casein kinase II). This chain is FACT complex subunit SPT16 (SUPT16H), found in Homo sapiens (Human).